The primary structure comprises 303 residues: MTHMSIFLSRDNKVIVQGITGSEATVHTARMLRAGTQIVGGVNARKAGTTVTHEDKGGRLIKLPVFGSVAEAMEKTGADVSIIFVPPTFAKDAIIEAIDAEIPLLVVITEGIPVQDTAYAWAYNLEAGHKTRIIGPNCPGIISPGQSLAGITPANITGPGPIGLVSKSGTLTYQMMFELRDLGFSTAIGIGGDPVIGTTHIDAIEAFEKDPDTKLIVMIGEIGGDAEERAADFIKTNVSKPVVGYVAGFTAPEGKTMGHAGAIVSGSSGTAAAKQEALEAAGVKVGKTPSATAALAREILLSL.

CoA is bound by residues 20–23 (TGSE), K46, and 108–110 (ITE). Position 173 (Y173) interacts with substrate. The Tele-phosphohistidine intermediate role is filled by H259.

It belongs to the succinate/malate CoA ligase alpha subunit family. In terms of assembly, heterotetramer of two alpha and two beta subunits.

The enzyme catalyses succinate + ATP + CoA = succinyl-CoA + ADP + phosphate. It carries out the reaction GTP + succinate + CoA = succinyl-CoA + GDP + phosphate. It functions in the pathway carbohydrate metabolism; tricarboxylic acid cycle; succinate from succinyl-CoA (ligase route): step 1/1. Functionally, succinyl-CoA synthetase functions in the citric acid cycle (TCA), coupling the hydrolysis of succinyl-CoA to the synthesis of either ATP or GTP and thus represents the only step of substrate-level phosphorylation in the TCA. The alpha subunit of the enzyme binds the substrates coenzyme A and phosphate, while succinate binding and nucleotide specificity is provided by the beta subunit. In Mycobacterium bovis (strain ATCC BAA-935 / AF2122/97), this protein is Succinate--CoA ligase [ADP-forming] subunit alpha.